Reading from the N-terminus, the 402-residue chain is Acetyl-CoA acetyltransferase (402 aa).

Catalysis depends on Cys90, which acts as the Acyl-thioester intermediate. The CoA site is built by Tyr185 and Lys230. Residue Tyr185 coordinates K(+). A K(+)-binding site is contributed by Ala250. Ser251 is a CoA binding site. A K(+)-binding site is contributed by Val348. Catalysis depends on proton acceptor residues His352 and Cys382.

Belongs to the thiolase-like superfamily. Thiolase family. Homotetramer.

It is found in the cytoplasm. It localises to the cytosol. The enzyme catalyses 2 acetyl-CoA = acetoacetyl-CoA + CoA. It functions in the pathway metabolic intermediate biosynthesis; (R)-mevalonate biosynthesis; (R)-mevalonate from acetyl-CoA: step 1/3. Functionally, acetyl-CoA acetyltransferase; part of the first module of ergosterol biosynthesis pathway that includes the early steps of the pathway, conserved across all eukaryotes, and which results in the formation of mevalonate from acetyl-coenzyme A (acetyl-CoA). ERG10 catalyzes the formation of acetoacetyl-CoA from acetyl-CoA. The first module starts with the action of the cytosolic acetyl-CoA acetyltransferase ERG10 that catalyzes the formation of acetoacetyl-CoA. The hydroxymethylglutaryl-CoA synthase ERG13 then condenses acetyl-CoA with acetoacetyl-CoA to form HMG-CoA. The 3-hydroxy-3-methylglutaryl-coenzyme A (HMG-CoA) reductase HMG1 finally reduces HMG-CoA to produce mevalonate. This Candida albicans (strain SC5314 / ATCC MYA-2876) (Yeast) protein is Acetyl-CoA acetyltransferase.